The following is a 630-amino-acid chain: Putative adenylate cyclase regulatory protein (630 aa).

The RING-type zinc-finger motif lies at 10 to 46 (CAVCREPWAEGALELFPCRHVFCTVCVVERWRCPSCQ). 18 LRR repeats span residues 184–206 (FLVH…CRLK), 207–230 (TLEA…CALP), 231–251 (QLTS…RCIH), 255–277 (KLKV…GGMR), 278–301 (SLEK…CKFS), 302–324 (NLRE…KNLI), 325–347 (NLKV…ERLV), 348–370 (NLDK…ANLS), 371–393 (NLKE…QDLN), 394–416 (NLEV…KNLS), 417–439 (KMRE…ETLK), 440–462 (GLEE…WSLH), 463–485 (HLRV…EGIT), 486–508 (GLEE…WNLR), 509–531 (NVCV…QCLT), 532–554 (GLEE…GNLR), 555–577 (NLKC…DRLV), and 578–599 (NLEK…MELM).

Its function is as follows. May interact with adenylate cyclase to regulate its activity. In terms of biological role, may be involved in the postranscriptional regulation of genes in VSG expression sites. The sequence is that of Putative adenylate cyclase regulatory protein (ESAG8C) from Trypanosoma equiperdum.